The primary structure comprises 215 residues: Golgi-associated RAB2 interactor protein 5A (215 aa).

Disordered stretches follow at residues 1-20 and 174-215; these read MKRGHEPKPAFGGAGEAGPG and QDYS…LWGL. Over residues 178 to 191 the composition is skewed to acidic residues; the sequence is ALEDDEDDDEDEDR.

The protein belongs to the GARIN family. In terms of assembly, interacts (via N-terminus) with RAB2B (in GTP-bound form).

It localises to the golgi apparatus. Its function is as follows. RAB2B effector protein which promotes cytosolic DNA-induced innate immune responses. Regulates IFN responses against DNA viruses by regulating the CGAS-STING signaling axis. The polypeptide is Golgi-associated RAB2 interactor protein 5A (GARIN5A) (Bos taurus (Bovine)).